Here is a 75-residue protein sequence, read N- to C-terminus: Large ribosomal subunit protein bL31 (75 aa).

Zn(2+)-binding residues include cysteine 16, cysteine 18, cysteine 38, and cysteine 41.

This sequence belongs to the bacterial ribosomal protein bL31 family. Type A subfamily. As to quaternary structure, part of the 50S ribosomal subunit. Zn(2+) serves as cofactor.

Its function is as follows. Binds the 23S rRNA. The chain is Large ribosomal subunit protein bL31 from Nocardioides sp. (strain ATCC BAA-499 / JS614).